Reading from the N-terminus, the 305-residue chain is Superkiller complex protein 8 (305 aa).

WD repeat units follow at residues 14-57 (AHED…LELQ), 62-101 (GHQL…QIKS), 104-143 (AGPV…KEHS), 146-187 (TRGK…HTLE), 188-227 (GHAM…LAGT), 230-269 (GHGS…CVNT), and 272-305 (DHQD…DCPM).

This sequence belongs to the SKI8 family. Component of the PAF1 complex. Component of the SKI complex.

It localises to the nucleus. It is found in the cytoplasm. Functionally, component of the PAF1 complex (PAF1C) which has multiple functions during transcription by RNA polymerase II and is implicated in regulation of development and maintenance of embryonic stem cell pluripotency. PAF1C associates with RNA polymerase II through interaction with POLR2A CTD non-phosphorylated and 'Ser-2'- and 'Ser-5'-phosphorylated forms and is involved in transcriptional elongation, acting both independently and synergistically with TCEA1 and in cooperation with the DSIF complex and HTATSF1. Also acts as a component of the SKI complex, a multiprotein complex that assists the RNA-degrading exosome during the mRNA decay and quality-control pathways. The SKI complex catalyzes mRNA extraction from 80S ribosomal complexes in the 3'-5' direction and channels mRNA to the cytosolic exosome for degradation. This Danio rerio (Zebrafish) protein is Superkiller complex protein 8 (skic8).